A 392-amino-acid chain; its full sequence is ESX-1 secretion-associated protein EspA (392 aa).

The interval 302-392 (TRQALRPRAD…GQKVLVRNVV (91 aa)) is disordered. Gly residues predominate over residues 334–344 (QGMGGPVGMGG).

Homodimer; disulfide-linked.

It localises to the secreted. Required for secretion of EsxA (ESAT-6) and EsxB (CFP-10) and for virulence. The sequence is that of ESX-1 secretion-associated protein EspA from Mycobacterium tuberculosis (strain CDC 1551 / Oshkosh).